Reading from the N-terminus, the 274-residue chain is 3-methyl-2-oxobutanoate hydroxymethyltransferase (274 aa).

Mg(2+)-binding residues include D49 and D88. 3-methyl-2-oxobutanoate-binding positions include 49–50 (DS), D88, and K118. E120 is a Mg(2+) binding site. The active-site Proton acceptor is E187.

The protein belongs to the PanB family. Homodecamer; pentamer of dimers. Mg(2+) is required as a cofactor.

It localises to the cytoplasm. It catalyses the reaction 3-methyl-2-oxobutanoate + (6R)-5,10-methylene-5,6,7,8-tetrahydrofolate + H2O = 2-dehydropantoate + (6S)-5,6,7,8-tetrahydrofolate. Its pathway is cofactor biosynthesis; (R)-pantothenate biosynthesis; (R)-pantoate from 3-methyl-2-oxobutanoate: step 1/2. In terms of biological role, catalyzes the reversible reaction in which hydroxymethyl group from 5,10-methylenetetrahydrofolate is transferred onto alpha-ketoisovalerate to form ketopantoate. This is 3-methyl-2-oxobutanoate hydroxymethyltransferase from Rhodopseudomonas palustris (strain BisB18).